A 201-amino-acid chain; its full sequence is tRNA (guanine-N(7)-)-methyltransferase (201 aa).

The S-adenosyl-L-methionine site is built by E33, E58, D85, and D108. The active site involves D108. Positions 112 and 144 each coordinate substrate.

The protein belongs to the class I-like SAM-binding methyltransferase superfamily. TrmB family.

The catalysed reaction is guanosine(46) in tRNA + S-adenosyl-L-methionine = N(7)-methylguanosine(46) in tRNA + S-adenosyl-L-homocysteine. It participates in tRNA modification; N(7)-methylguanine-tRNA biosynthesis. Catalyzes the formation of N(7)-methylguanine at position 46 (m7G46) in tRNA. This is tRNA (guanine-N(7)-)-methyltransferase from Anaeromyxobacter dehalogenans (strain 2CP-C).